The sequence spans 294 residues: Retinoic acid receptor responder protein 1 (294 aa).

Residues 1 to 20 are Lumenal-facing; the sequence is MQPRRQRLPAPWSGPRGPRP. A helical; Signal-anchor for type III membrane protein membrane pass occupies residues 21-42; it reads TAPLLALLLLLAPVAAPAGSGD. 2 consecutive Cystatin LXN-type domains span residues 38 to 153 and 173 to 276; these read AGSG…EKKK and EIVS…TPEE. Serine 40 is a glycosylation site (O-linked (Xyl...) (chondroitin sulfate) serine). Residues 43-294 lie on the Cytoplasmic side of the membrane; sequence PDDPGQPQDA…AVVPTELSNF (252 aa). The tract at residues 273–294 is disordered; it reads TPEEASGTEEGSAVVPTELSNF.

The protein belongs to the protease inhibitor I47 (latexin) family. Interacts with AGBL2, KIF11 and MAPRE1. In terms of processing, not N-glycosylated. O-glycosylated; contains chondroitin sulfate. Detected in urine (at protein level).

Its subcellular location is the membrane. The protein localises to the secreted. Its function is as follows. Inhibitor of the cytoplasmic carboxypeptidase AGBL2, may regulate the alpha-tubulin tyrosination cycle. This is Retinoic acid receptor responder protein 1 (RARRES1) from Homo sapiens (Human).